A 135-amino-acid chain; its full sequence is Fatty acid-binding protein 5 (135 aa).

Position 2 is an N-acetylalanine (Ala-2). Ser-3 bears the Phosphoserine mark. The Nuclear localization signal motif lies at 24–34 (KELGVGLALRK). Residues Cys-43, Thr-56, and Arg-109 each coordinate 1-eicosanoylglycerol. Cysteines 120 and 127 form a disulfide. 129–131 (RVY) serves as a coordination point for 1-eicosanoylglycerol. (9Z,12Z)-octadecadienoate is bound at residue 129–131 (RVY). Residue Tyr-131 participates in hexadecanoate binding. Tyr-131 contacts N-eicosanoyl ethanolamine. The residue at position 131 (Tyr-131) is a Phosphotyrosine.

This sequence belongs to the calycin superfamily. Fatty-acid binding protein (FABP) family. Monomer. In terms of tissue distribution, widely expressed.

The protein localises to the cytoplasm. It is found in the nucleus. It localises to the synapse. Its subcellular location is the postsynaptic density. The protein resides in the secreted. The enzyme catalyses hexadecanoate(out) = hexadecanoate(in). It catalyses the reaction (9Z,12Z)-octadecadienoate(out) = (9Z,12Z)-octadecadienoate(in). It carries out the reaction (9Z)-octadecenoate(out) = (9Z)-octadecenoate(in). Functionally, intracellular carrier for long-chain fatty acids and related active lipids, such as endocannabinoids, that regulate the metabolism and actions of the ligands they bind. In addition to the cytosolic transport, selectively delivers specific fatty acids from the cytosol to the nucleus, wherein they activate nuclear receptors. Delivers retinoic acid to the nuclear receptor peroxisome proliferator-activated receptor delta; which promotes proliferation and survival. May also serve as a synaptic carrier of endocannabinoid at central synapses and thus controls retrograde endocannabinoid signaling. Modulates inflammation by regulating PTGES induction via NF-kappa-B activation, and prostaglandin E2 (PGE2) biosynthesis during inflammation. May be involved in keratinocyte differentiation. This Mus musculus (Mouse) protein is Fatty acid-binding protein 5.